We begin with the raw amino-acid sequence, 233 residues long: Zinc metalloproteinase recombinant fibrinogenase II (233 aa).

The Peptidase M12B domain maps to 19 to 215 (KYVETVFVVD…HNPECIDNEP (197 aa)). Glutamate 22 and aspartate 106 together coordinate Ca(2+). Cystine bridges form between cysteine 130-cysteine 210, cysteine 170-cysteine 194, and cysteine 172-cysteine 177. Histidine 155 lines the Zn(2+) pocket. The active site involves glutamate 156. Zn(2+) contacts are provided by histidine 159 and histidine 165. N-linked (GlcNAc...) asparagine glycosylation occurs at asparagine 193. Ca(2+) is bound by residues cysteine 210, asparagine 213, asparagine 228, leucine 230, and glutamate 232.

It belongs to the venom metalloproteinase (M12B) family. P-III subfamily. Zn(2+) serves as cofactor. As to expression, expressed by the venom gland.

It is found in the secreted. With respect to regulation, inhibited by PMSF and EDTA. Slightly inhibited by Cu(2+) and Zn(2+). Not inhibited by aprotinin, SBTI, Ca(2+), Mg(2+), Na(+) and K(+). Snake venom zinc metalloprotease that acts at several levels. It has direct fibrino(geno)lytic activity (Aalpha chain of fibrinogen is cleaved quickly, Bbeta chain slowly, and gamma chain even more slowly) and degradation of TNF-alpha. These activities permit to protect against sepsis and disseminated intravascular coagulation. It inhibits ADP-induced platelet aggregation in human platelet-rich plasma (IC(50)=65.4 ug/ml). It decreases the activity of complement by degrading human C5, C6 and C9 in vitro, decreasing serum levels of C1q, C3 and C4 in rat, and inhibiting the MAC deposition on HUVECs membrane. This inhibition of complement protects against hyperacute rejection that is the main barrier in xenotransplantation. Has preference for Lys at the P1 position. Cleaves insulin B chain at '36-Val-|-Glu-37', '39-Leu-|-Tyr-40', and '48-Phe-|-Phe-49' bonds. Also cleaves fibronectin and type IV collagen. This Deinagkistrodon acutus (Hundred-pace snake) protein is Zinc metalloproteinase recombinant fibrinogenase II.